The chain runs to 471 residues: Putative multidrug resistance protein MdtD (471 aa).

Residues 1–11 are Periplasmic-facing; it reads MTDLPDSTRWQ. Residues 12-32 form a helical membrane-spanning segment; the sequence is LWIVAFGFFMQSLDTTIVNTA. At 33–48 the chain is on the cytoplasmic side; it reads LPSMAQSLGESPLHMH. Residues 49–69 form a helical membrane-spanning segment; it reads MVIVSYVLTVAVMLPASGWLA. At 70–76 the chain is on the periplasmic side; it reads DKVGVRN. Residues 77-97 traverse the membrane as a helical segment; it reads IFFTAIVLFTLGSLFCALSGT. The Cytoplasmic segment spans residues 98 to 101; sequence LNEL. The helical transmembrane segment at 102-124 threads the bilayer; the sequence is LLARALQGVGGAMMVPVGRLTVM. The Periplasmic segment spans residues 125-137; that stretch reads KIVPREQYMAAMT. The chain crosses the membrane as a helical span at residues 138–158; that stretch reads FVTLPGQVGPLLGPALGGLLV. Topologically, residues 159 to 164 are cytoplasmic; the sequence is EYASWH. Residues 165–185 traverse the membrane as a helical segment; it reads WIFLINIPVGIIGAIATLMLM. Residues 186 to 196 lie on the Periplasmic side of the membrane; sequence PNYTMQTRRFD. The helical transmembrane segment at 197 to 217 threads the bilayer; the sequence is LSGFLLLAVGMAVLTLALDGS. Topologically, residues 218-224 are cytoplasmic; that stretch reads KGTGFSP. The chain crosses the membrane as a helical span at residues 225–245; the sequence is LAIAGLVAVGVVALVLYLLHA. Residues 246-262 are Periplasmic-facing; the sequence is QNNNRALFSLKLFRTRT. Residues 263–283 form a helical membrane-spanning segment; it reads FSLGLAGSFAGRIGSGMLPFM. Residues 284-285 are Cytoplasmic-facing; it reads TP. Residues 286–306 form a helical membrane-spanning segment; it reads VFLQIGLGFSPFHAGLMMIPM. Topologically, residues 307-341 are periplasmic; sequence VLGSMGMKRIVVQVVNRFGYRRVLVATTLGLSLVT. The chain crosses the membrane as a helical span at residues 342 to 362; it reads LLFMTTALLGWYYVLPFVLFL. Residues 363-395 lie on the Cytoplasmic side of the membrane; that stretch reads QGMVNSTRFSSMNTLTLKDLPDNLASSGNSLLS. The helical transmembrane segment at 396–416 threads the bilayer; sequence MIMQLSMSIGVTIAGLLLGLF. The Periplasmic portion of the chain corresponds to 417-430; it reads GSQHVSVDSGTTQT. The helical transmembrane segment at 431 to 451 threads the bilayer; the sequence is VFMYTWLSMAFIIALPAFVFA. Residues 452–471 are Cytoplasmic-facing; sequence RVPSDTHQNVAISRRKRSAQ.

The protein belongs to the major facilitator superfamily. TCR/Tet family.

The protein resides in the cell inner membrane. This is Putative multidrug resistance protein MdtD from Escherichia coli O45:K1 (strain S88 / ExPEC).